The chain runs to 371 residues: Putative glutamate--cysteine ligase 2 (371 aa).

Belongs to the glutamate--cysteine ligase type 2 family. YbdK subfamily.

It carries out the reaction L-cysteine + L-glutamate + ATP = gamma-L-glutamyl-L-cysteine + ADP + phosphate + H(+). In terms of biological role, ATP-dependent carboxylate-amine ligase which exhibits weak glutamate--cysteine ligase activity. This chain is Putative glutamate--cysteine ligase 2, found in Burkholderia mallei (strain NCTC 10247).